The primary structure comprises 155 residues: UPF0178 protein Clos_2709 (155 aa).

Belongs to the UPF0178 family.

This is UPF0178 protein Clos_2709 from Alkaliphilus oremlandii (strain OhILAs) (Clostridium oremlandii (strain OhILAs)).